Reading from the N-terminus, the 291-residue chain is MKRIALFLATNLAVMIVFSIVLNIVYAVTGIQQGSLSGLLVMAVLFGFGGSLISLMMSKSMALRSVGGEVIEQPRNETEHWLLETVSRQAQQVGIGMPTVAIYDSPDMNAFATGAKRDDSLVAVSTGLLHSMTRDEAEAVLAHEVSHIANGDMITMTLMQGVVNTFVIFLSRMIANAVSGFTSSDEEGEGEGGSFMTYFIVSTILELAFGFLASFLTMWFSRHREFHADAGAAQLVGKQKMIAALERLRMGQESQLEGSMMAFGINGKKSLTELLMSHPPLEKRIDALRQM.

Helical transmembrane passes span 4–24 (IALF…VLNI) and 36–56 (LSGL…ISLM). Histidine 143 contacts Zn(2+). The active site involves glutamate 144. Histidine 147 lines the Zn(2+) pocket. Transmembrane regions (helical) follow at residues 151-171 (GDMI…IFLS) and 199-219 (FIVS…LTMW). Glutamate 225 contributes to the Zn(2+) binding site.

It belongs to the peptidase M48B family. Zn(2+) is required as a cofactor.

The protein localises to the cell inner membrane. This chain is Protease HtpX, found in Aliivibrio fischeri (strain MJ11) (Vibrio fischeri).